A 910-amino-acid chain; its full sequence is MEGGGKPNSASNSRDDGNSVFPSKAPATGPVAADKRLGTPPGGGAAGKEHGNSVCFKVDGGGGEEPAGSFEDAEGPRRQYGFMQRQFTSMLQPGVNKFSLRMFGSQKAVEKEQERVKTAGFWIIHPYSDFRFYWDLIMLIMMVGNLVIIPVGITFFTEQTTTPWIIFNVASDTVFLLDLIMNFRTGTVNEDSSEIILDPKVIKMNYLKSWFVVDFISSIPVDYIFLIVEKGMDSEVYKTARALRIVRFTKILSLLRLLRLSRLIRYIHQWEEIFHMTYDLASAVVRIFNLIGMMLLLCHWDGCLQFLVPLLQDFPPDCWVSLNEMVNDSWGKQYSYALFKAMSHMLCIGYGAQAPVSMSDLWITMLSMIVGATCYAMFVGHATALIQSLDSSRRQYQEKYKQVEQYMSFHKLPADMRQKIHDYYEHRYQGKIFDEENILSELNDPLREEIVNFNCRKLVATMPLFANADPNFVTAMLSKLRFEVFQPGDYIIREGAVGKKMYFIQHGVAGVITKSSKEMKLTDGSYFGEICLLTKGRRTASVRADTYCRLYSLSVDNFNEVLEEYPMMRRAFETVAIDRLDRIGKKNSILLQKFQKDLNTGVFNNQENEILKQIVKHDREMVQAIPPINYPQMTALNCTSSTTTPTSRMRTQSPPVYTATSLSHSNLHSPSPSTQTPQPSAILSPCSYTTAVCSPPIQSPLATRTFHYASPTASQLSLMQQPQQQLPQSQVQQTQTQTQQQQQQQQQQQQQQQQQQQQQQQQQQQQQQQQQQQQQPQTPGSSTPKNEVHKSTQALHNTNLTKEVRPLSASQPSLPHEVSTLISRPHPTVGESLASIPQPVAAVHSTGLQAGSRSTVPQRVTLFRQMSSGAIPPNRGVPPAPPPPAAVQRESPSVLNTDPDAEKPRFASNL.

The tract at residues 1–75 (MEGGGKPNSA…PAGSFEDAEG (75 aa)) is disordered. The Cytoplasmic portion of the chain corresponds to 1–131 (MEGGGKPNSA…WIIHPYSDFR (131 aa)). The helical transmembrane segment at 132–153 (FYWDLIMLIMMVGNLVIIPVGI) threads the bilayer. Residues 154 to 162 (TFFTEQTTT) are Extracellular-facing. A helical transmembrane segment spans residues 163–183 (PWIIFNVASDTVFLLDLIMNF). The Cytoplasmic segment spans residues 184–204 (RTGTVNEDSSEIILDPKVIKM). A helical membrane pass occupies residues 205-225 (NYLKSWFVVDFISSIPVDYIF). The Extracellular portion of the chain corresponds to 226-249 (LIVEKGMDSEVYKTARALRIVRFT). Residues 250-270 (KILSLLRLLRLSRLIRYIHQW) traverse the membrane as a helical; Voltage-sensor segment. Residues 271 to 284 (EEIFHMTYDLASAV) are Cytoplasmic-facing. The helical transmembrane segment at 285 to 307 (VRIFNLIGMMLLLCHWDGCLQFL) threads the bilayer. Residues 308 to 333 (VPLLQDFPPDCWVSLNEMVNDSWGKQ) lie on the Extracellular side of the membrane. N-linked (GlcNAc...) asparagine glycosylation occurs at Asn327. The pore-forming intramembrane region spans 334-355 (YSYALFKAMSHMLCIGYGAQAP). Positions 347–351 (CIGYG) match the Selectivity filter motif. Residues 356 to 360 (VSMSD) lie on the Extracellular side of the membrane. Residues 361–381 (LWITMLSMIVGATCYAMFVGH) traverse the membrane as a helical segment. Topologically, residues 382 to 910 (ATALIQSLDS…AEKPRFASNL (529 aa)) are cytoplasmic. 7 residues coordinate 3',5'-cyclic AMP: Gly528, Glu529, Cys531, Arg538, Thr539, Arg579, and Arg582. Disordered regions lie at residues 634–681 (TALN…QPSA), 771–791 (QQQQ…VHKS), and 865–910 (QMSS…ASNL). The segment covering 639–680 (TSSTTTPTSRMRTQSPPVYTATSLSHSNLHSPSPSTQTPQPS) has biased composition (low complexity). The segment covering 780 to 791 (GSSTPKNEVHKS) has biased composition (polar residues). Residues 875 to 885 (RGVPPAPPPPA) show a composition bias toward pro residues. Over residues 900–910 (DAEKPRFASNL) the composition is skewed to basic and acidic residues.

The protein belongs to the potassium channel HCN family. Homotetramer. Heterotetramer with HCN2. The potassium channel is composed of a homo- or heterotetrameric complex of pore-forming subunits. Interacts with KCNE2. Interacts with the SH3 domain of CSK. Post-translationally, N-glycosylated. Predominantly expressed in brain. Highly expressed in apical dendrites of pyramidal neurons in the cortex, in the layer corresponding to the stratum lacunosum-moleculare in the hippocampus and in axons of basket cells in the cerebellum (at protein level). Expressed in a subset of elongated cells in taste buds.

It is found in the cell membrane. The enzyme catalyses Na(+)(in) = Na(+)(out). It carries out the reaction K(+)(in) = K(+)(out). Activated by cAMP. cAMP binding causes a conformation change that leads to the assembly of an active tetramer and channel opening. Compared to other family members, cAMP has less stimulatory effect on HCN1 because part of the molecules already contain bound cAMP and form homotetramers when cAMP levels are low, this inherent tetramerization in HCN1 results in a weaker response to increased cAMP. In terms of biological role, hyperpolarization-activated ion channel that are permeable to sodium and potassium ions. Exhibits weak selectivity for potassium over sodium ions. Contributes to the native pacemaker currents in heart (If) and in neurons (Ih). Participates in cerebellar mechanisms of motor learning. May mediate responses to sour stimuli. The polypeptide is Potassium/sodium hyperpolarization-activated cyclic nucleotide-gated channel 1 (Hcn1) (Mus musculus (Mouse)).